Consider the following 611-residue polypeptide: Protein halfway (611 aa).

Residues 1-22 (MLAYTHGTWLLLLLLLVAGACA) form the signal peptide. Disordered stretches follow at residues 31 to 64 (DPAA…LKED), 90 to 132 (SLAE…AAPE), and 154 to 185 (GRAE…CQCR). A compositionally biased stretch (basic residues) spans 43-59 (AHAHPQARHHHHAHPHA). The segment covering 90-101 (SLAETQSMSDPG) has biased composition (polar residues). A compositionally biased stretch (low complexity) spans 102 to 123 (SVTDTTSTSTSHSTSTTSTTSP). The segment covering 159 to 183 (SEGQGSTVAQSEAQNRGGQGNSQCQ) has biased composition (polar residues). N-linked (GlcNAc...) asparagine glycosylation is found at N221, N246, N264, and N269. 4 LRR repeats span residues 236–257 (SLQS…FPRL), 259–280 (ALKC…AVKD), 283–304 (HLEF…NQNK), and 313–334 (NMRM…NFLN). Residues 361–416 (ENRKRCVTNCPVIPNYGSCNCTLENIMIIQDNQSKPQCHVDCSNLGLVELPQRLPD) form the LRRNT domain. 3 LRR repeats span residues 417-438 (NTFM…FHTN), 443-464 (NINR…EGTK), and 468-489 (TFQR…FLNN). An LRRCT domain is found at 505–554 (NKLQCDCNSAKTLQNWLKERSSDIPDYMEIRCRNMPQRVIELQEAKLCQS).

In terms of biological role, has a role in the ecdysone induced cascade; probably indirect control of 'late' ecdysone genes. The polypeptide is Protein halfway (Drosophila melanogaster (Fruit fly)).